The following is an 868-amino-acid chain: DNA mismatch repair protein MutS (868 aa).

620-627 lines the ATP pocket; sequence GPNMGGKS.

The protein belongs to the DNA mismatch repair MutS family.

Its function is as follows. This protein is involved in the repair of mismatches in DNA. It is possible that it carries out the mismatch recognition step. This protein has a weak ATPase activity. The sequence is that of DNA mismatch repair protein MutS from Xylella fastidiosa (strain Temecula1 / ATCC 700964).